We begin with the raw amino-acid sequence, 61 residues long: Probable tautomerase BA_5626/GBAA_5626/BAS5226 (61 aa).

Pro2 serves as the catalytic Proton acceptor; via imino nitrogen.

This sequence belongs to the 4-oxalocrotonate tautomerase family.

The sequence is that of Probable tautomerase BA_5626/GBAA_5626/BAS5226 from Bacillus anthracis.